Consider the following 101-residue polypeptide: Small ribosomal subunit protein bS18c (101 aa).

This sequence belongs to the bacterial ribosomal protein bS18 family. In terms of assembly, part of the 30S ribosomal subunit.

Its subcellular location is the plastid. It is found in the chloroplast. This is Small ribosomal subunit protein bS18c from Lepidium virginicum (Virginia pepperweed).